A 283-amino-acid polypeptide reads, in one-letter code: Pantothenate synthetase (283 aa).

Residue 30 to 37 coordinates ATP; that stretch reads MGNLHDGH. The active-site Proton donor is the H37. (R)-pantoate is bound at residue Q61. Residue Q61 participates in beta-alanine binding. An ATP-binding site is contributed by 149-152; that stretch reads GEKD. Q155 serves as a coordination point for (R)-pantoate. 186-189 contacts ATP; sequence LSSR.

Belongs to the pantothenate synthetase family. As to quaternary structure, homodimer.

The protein resides in the cytoplasm. The catalysed reaction is (R)-pantoate + beta-alanine + ATP = (R)-pantothenate + AMP + diphosphate + H(+). It functions in the pathway cofactor biosynthesis; (R)-pantothenate biosynthesis; (R)-pantothenate from (R)-pantoate and beta-alanine: step 1/1. Functionally, catalyzes the condensation of pantoate with beta-alanine in an ATP-dependent reaction via a pantoyl-adenylate intermediate. In Escherichia coli O17:K52:H18 (strain UMN026 / ExPEC), this protein is Pantothenate synthetase.